Here is a 151-residue protein sequence, read N- to C-terminus: Large ribosomal subunit protein uL13 (151 aa).

A disordered region spans residues 129–151; it reads PTHPHDAQKPKELNINTIPGAES. The span at 131 to 140 shows a compositional bias: basic and acidic residues; sequence HPHDAQKPKE.

The protein belongs to the universal ribosomal protein uL13 family. Part of the 50S ribosomal subunit.

This protein is one of the early assembly proteins of the 50S ribosomal subunit, although it is not seen to bind rRNA by itself. It is important during the early stages of 50S assembly. The protein is Large ribosomal subunit protein uL13 of Trichormus variabilis (strain ATCC 29413 / PCC 7937) (Anabaena variabilis).